Reading from the N-terminus, the 210-residue chain is Uracil phosphoribosyltransferase (210 aa).

5-phospho-alpha-D-ribose 1-diphosphate-binding positions include arginine 78, arginine 103, and aspartate 130 to serine 138. Residues isoleucine 193 and glycine 198–alanine 200 each bind uracil. Aspartate 199 is a binding site for 5-phospho-alpha-D-ribose 1-diphosphate.

This sequence belongs to the UPRTase family. The cofactor is Mg(2+).

The enzyme catalyses UMP + diphosphate = 5-phospho-alpha-D-ribose 1-diphosphate + uracil. The protein operates within pyrimidine metabolism; UMP biosynthesis via salvage pathway; UMP from uracil: step 1/1. Allosterically activated by GTP. Catalyzes the conversion of uracil and 5-phospho-alpha-D-ribose 1-diphosphate (PRPP) to UMP and diphosphate. The protein is Uracil phosphoribosyltransferase of Salinibacter ruber (strain DSM 13855 / M31).